Reading from the N-terminus, the 203-residue chain is Glycerol-3-phosphate acyltransferase (203 aa).

4 consecutive transmembrane segments (helical) span residues 4–24 (MAVTMTIIAYLLGSISSAVLI), 80–100 (PVLLGVIAIAACLGHMYPLFF), 117–137 (PIGLDLTGMIMATWLLVAILF), and 139–159 (YSSLAALVTVLLAPMYTWMIK).

Belongs to the PlsY family. As to quaternary structure, probably interacts with PlsX.

Its subcellular location is the cell inner membrane. It carries out the reaction an acyl phosphate + sn-glycerol 3-phosphate = a 1-acyl-sn-glycero-3-phosphate + phosphate. The protein operates within lipid metabolism; phospholipid metabolism. In terms of biological role, catalyzes the transfer of an acyl group from acyl-phosphate (acyl-PO(4)) to glycerol-3-phosphate (G3P) to form lysophosphatidic acid (LPA). This enzyme utilizes acyl-phosphate as fatty acyl donor, but not acyl-CoA or acyl-ACP. This chain is Glycerol-3-phosphate acyltransferase, found in Vibrio vulnificus (strain YJ016).